The chain runs to 29 residues: Cyclotide mra2 (29 aa).

Cystine bridges form between Cys-4–Cys-19, Cys-8–Cys-21, and Cys-13–Cys-26.

Post-translationally, this is a cyclic peptide. Contains 3 disulfide bonds.

Probably participates in a plant defense mechanism. This is Cyclotide mra2 from Melicytus ramiflorus (Whitey wood).